The chain runs to 921 residues: Protein translocase subunit SecA (921 aa).

ATP is bound by residues glutamine 86, 104–108 (GEGKT), and aspartate 512. Cysteine 905, cysteine 907, cysteine 916, and histidine 917 together coordinate Zn(2+).

The protein belongs to the SecA family. Monomer and homodimer. Part of the essential Sec protein translocation apparatus which comprises SecA, SecYEG and auxiliary proteins SecDF-YajC and YidC. It depends on Zn(2+) as a cofactor.

The protein resides in the cell inner membrane. It localises to the cytoplasm. The catalysed reaction is ATP + H2O + cellular proteinSide 1 = ADP + phosphate + cellular proteinSide 2.. Its function is as follows. Part of the Sec protein translocase complex. Interacts with the SecYEG preprotein conducting channel. Has a central role in coupling the hydrolysis of ATP to the transfer of proteins into and across the cell membrane, serving both as a receptor for the preprotein-SecB complex and as an ATP-driven molecular motor driving the stepwise translocation of polypeptide chains across the membrane. In Caulobacter sp. (strain K31), this protein is Protein translocase subunit SecA.